Consider the following 236-residue polypeptide: MSEPPRAETFVFLDLEATGLPNMDPEIAEISLFAVHRSSLENPERDDSGSLVLPRVLDKLTLCMCPERPFTAKASEITGLSSESLMHCGKAGFNGAVVRTLQGFLSRQEGPICLVAHNGFDYDFPLLCTELQRLGAHLPQDTVCLDTLPALRGLDRAHSHGTRAQGRKSYSLASLFHRYFQAEPSAAHSAEGDVHTLLLIFLHRAPELLAWADEQARSWAHIEPMYVPPDGPSLEA.

Residues aspartate 14 and glutamate 16 each contribute to the Mg(2+) site. Residues 16–17 (EA) and tyrosine 122 contribute to the substrate site. Histidine 188 acts as the Proton donor/acceptor in catalysis. Position 193 (aspartate 193) interacts with Mg(2+). Aspartate 193 is a binding site for substrate.

Belongs to the exonuclease superfamily. TREX family. In terms of assembly, homodimer. It depends on Mg(2+) as a cofactor.

Its subcellular location is the nucleus. The catalysed reaction is Exonucleolytic cleavage in the 3'- to 5'-direction to yield nucleoside 5'-phosphates.. Its function is as follows. Exonuclease with a preference for double-stranded DNA with mismatched 3' termini. May play a role in DNA repair. This is Three prime repair exonuclease 2 (Trex2) from Mus musculus (Mouse).